A 138-amino-acid chain; its full sequence is Ribulose bisphosphate carboxylase small subunit (138 aa).

This sequence belongs to the RuBisCO small chain family. In terms of assembly, heterohexadecamer of 8 large and 8 small subunits.

Its subcellular location is the plastid. It localises to the chloroplast. Its function is as follows. RuBisCO catalyzes two reactions: the carboxylation of D-ribulose 1,5-bisphosphate, the primary event in carbon dioxide fixation, as well as the oxidative fragmentation of the pentose substrate in the photorespiration process. Both reactions occur simultaneously and in competition at the same active site. Although the small subunit is not catalytic it is essential for maximal activity. In Pyropia suborbiculata (Red alga), this protein is Ribulose bisphosphate carboxylase small subunit.